Here is a 1040-residue protein sequence, read N- to C-terminus: Multidrug resistance protein MdtB (1040 aa).

Helical transmembrane passes span 16–36 (FIMR…AGII), 342–362 (DTQF…YVFL), 369–389 (IIPA…MVFL), 396–416 (LTLM…IVVI), 440–460 (IGFT…PLLF), 472–492 (FAVT…TLTP), 537–557 (WATL…WIVI), 869–889 (LIVA…ESFI), 890–910 (HPVT…LALM), 911–931 (LSGS…IGIV), 968–988 (ILMT…STGV), and 998–1018 (IGMV…TPVI).

It belongs to the resistance-nodulation-cell division (RND) (TC 2.A.6) family. MdtB subfamily. In terms of assembly, part of a tripartite efflux system composed of MdtA, MdtB and MdtC. MdtB forms a heteromultimer with MdtC.

Its subcellular location is the cell inner membrane. In Enterobacter sp. (strain 638), this protein is Multidrug resistance protein MdtB.